The primary structure comprises 32 residues: Protamine-1 (32 aa).

Positions 1 to 32 are disordered; that stretch reads PRRRRASSGRPVRRRRRPKMSRRRRRGGRRRR.

Testis.

The protein localises to the nucleus. Its subcellular location is the chromosome. Functionally, protamines substitute for histones in the chromatin of sperm during the haploid phase of spermatogenesis. They compact sperm DNA into a highly condensed, stable and inactive complex. The protein is Protamine-1 of Esox lucius (Northern pike).